The chain runs to 315 residues: MQKPWVEKYRPETLPEVVGHHEIIKRLTNYVEKKSMPHLLFSGSPGVGKTTAALALAKDLYGETWRENFLELNSSDERGIDVIRTKVKDFARTKPIGDAPFKVIFLDESDALTSDAQNALRRTMEKYSDICRFILSCNYPSKIIPPIQSRCAIFRFSPLKTEDLVENLKDISEKETLTLEKGGIDAIIYVSEGDMRKAINVLQTAAAVSDTVTEEIVYKVASKARPDEIKKMTHLALNGKFVEAKEQLYNLMIDWGMSGEDILIQVFREVPNLDISEKEKVHLVEAIGECDFRIVEGSNERIQLSALLAKMGILE.

Residue 43–50 (GSPGVGKT) coordinates ATP.

Belongs to the activator 1 small subunits family. RfcS subfamily. Heteromultimer composed of small subunits (RfcS) and large subunits (RfcL).

Functionally, part of the RFC clamp loader complex which loads the PCNA sliding clamp onto DNA. This is Replication factor C small subunit from Methanococcus maripaludis (strain C5 / ATCC BAA-1333).